The sequence spans 282 residues: MATYLIGDVHGCYDELIALLHKVEFTPGKDTLWLTGDLVARGPGSLDVLRYVKSLGDSVRLVLGNHDLHLLAVFAGISRNKPKDRLTPLLEAPDADELLNWLRRQPLLQIDEEKKLVMAHAGITPQWDLQTAKECARDVEAVLSSDSYPFFLDAMYGDMPNNWSPELRGLGRLRFITNAFTRMRFCFPNGQLDMYSKESPEEAPAPLKPWFAIPGPVAEEYSIAFGHWASLEGKGTPEGIYALDTGCCWGGTLTCLRWEDKQYFVQPSNRHKDLGEGEAVAS.

This sequence belongs to the Ap4A hydrolase family.

It catalyses the reaction P(1),P(4)-bis(5'-adenosyl) tetraphosphate + H2O = 2 ADP + 2 H(+). In terms of biological role, hydrolyzes diadenosine 5',5'''-P1,P4-tetraphosphate to yield ADP. The chain is Bis(5'-nucleosyl)-tetraphosphatase, symmetrical from Escherichia fergusonii (strain ATCC 35469 / DSM 13698 / CCUG 18766 / IAM 14443 / JCM 21226 / LMG 7866 / NBRC 102419 / NCTC 12128 / CDC 0568-73).